The primary structure comprises 572 residues: MMSVKIKRSVYADMFGPTTGDKVRLADTDLIIEVEKDFTVYGEEVKFGGGKVIRDGMGQSQVTNKQGAADTVITNALIVDHWGIVKADVAIKDGMISAIGKAGNPDIQPGVTIIIGPGTDVIAGEGKILTAGGFDSHIHFICPQQIEHALMSGVTSMLGGGTGPSHGTFATTCTPGPWHMGRMIQSFDAFPVNLGISGKGNASRPAPLVEMIKGGACALKLHEDWGTTPAAIDNCLSVADDYDIQVMIHTDTLNESGFVEDTIKAFKGRTIHAFHTEGAGGGHAPDIIKVAGLKNVLPSSTNPTRPFTRNTIDEHLDMLMVCHHLDPSIAEDLAFAESRIRKETIAAEDILHDLGALSMMSSDSQAMGRLGEVIIRTWQTADKMKKQRGSLPQDKGKDNDNFRVKRYIAKYTINPAIAHGVSKLIGSVEKGKLADLVLWSPAFFGVKPDCIVKGGTIVAAPMGDPNASIPTPQPVHYQPMFGAFGKARTASSVVFTSKAAITGGLARKLGIEKKLYAVQNTRGRISKKSMIHNDATPNIEVDPETYEVRADGELLTCAPAEVLPMAQRYFMY.

A Urease domain is found at 132–572 (GGFDSHIHFI…LPMAQRYFMY (441 aa)). Residues His137, His139, and Lys220 each coordinate Ni(2+). An N6-carboxylysine modification is found at Lys220. His222 provides a ligand contact to substrate. 2 residues coordinate Ni(2+): His249 and His275. His323 functions as the Proton donor in the catalytic mechanism. Residue Asp363 coordinates Ni(2+).

The protein belongs to the metallo-dependent hydrolases superfamily. Urease alpha subunit family. In terms of assembly, heterotrimer of UreA (gamma), UreB (beta) and UreC (alpha) subunits. Three heterotrimers associate to form the active enzyme. The cofactor is Ni cation. Carboxylation allows a single lysine to coordinate two nickel ions.

The protein resides in the cytoplasm. It catalyses the reaction urea + 2 H2O + H(+) = hydrogencarbonate + 2 NH4(+). Its pathway is nitrogen metabolism; urea degradation; CO(2) and NH(3) from urea (urease route): step 1/1. The protein is Urease subunit alpha of Bradyrhizobium diazoefficiens (strain JCM 10833 / BCRC 13528 / IAM 13628 / NBRC 14792 / USDA 110).